The following is a 173-amino-acid chain: Transcriptional repressor NrdR (173 aa).

Residues C3–C34 fold into a zinc finger. Residues P49–D139 form the ATP-cone domain.

The protein belongs to the NrdR family. Requires Zn(2+) as cofactor.

Its function is as follows. Negatively regulates transcription of bacterial ribonucleotide reductase nrd genes and operons by binding to NrdR-boxes. The sequence is that of Transcriptional repressor NrdR from Stenotrophomonas maltophilia (strain R551-3).